The primary structure comprises 610 residues: DNA mismatch repair protein MutL (610 aa).

It belongs to the DNA mismatch repair MutL/HexB family.

Its function is as follows. This protein is involved in the repair of mismatches in DNA. It is required for dam-dependent methyl-directed DNA mismatch repair. May act as a 'molecular matchmaker', a protein that promotes the formation of a stable complex between two or more DNA-binding proteins in an ATP-dependent manner without itself being part of a final effector complex. The sequence is that of DNA mismatch repair protein MutL from Rickettsia rickettsii (strain Sheila Smith).